The sequence spans 317 residues: MVTVIDTLARPRHPEKANRPETEVLRKPDWIRVKAPGSAGWSQTAEIVRANGLHTVCEEAGCPNIGECWEKKHATFMIMGDTCTRACAFCNVRTGMPEALDQGEPQKVGDAVAKLGLSHVVITSVDRDDLADGGAEHFARTIAAIRKASPGTTIEILTPDFLRKDGALEVVVAARPDVFNHNLETVPAKYLSVRPGARYFHSLRLLQKVKELDGSIFTKSGIMVGLGEERPEVLQLMDDLRSAEVDFITIGQYLQPTRKHHKVERFVTPDEFKAYETVAYAKGFLMVSASPLTRSSHHAGDDFEKLRAARVARLGRS.

The tract at residues 1–21 (MVTVIDTLARPRHPEKANRPE) is disordered. Residues 12 to 21 (RHPEKANRPE) are compositionally biased toward basic and acidic residues. 7 residues coordinate [4Fe-4S] cluster: C57, C62, C68, C83, C87, C90, and S296. The 217-residue stretch at 69-285 (WEKKHATFMI…ETVAYAKGFL (217 aa)) folds into the Radical SAM core domain.

It belongs to the radical SAM superfamily. Lipoyl synthase family. [4Fe-4S] cluster is required as a cofactor.

The protein localises to the cytoplasm. It carries out the reaction [[Fe-S] cluster scaffold protein carrying a second [4Fe-4S](2+) cluster] + N(6)-octanoyl-L-lysyl-[protein] + 2 oxidized [2Fe-2S]-[ferredoxin] + 2 S-adenosyl-L-methionine + 4 H(+) = [[Fe-S] cluster scaffold protein] + N(6)-[(R)-dihydrolipoyl]-L-lysyl-[protein] + 4 Fe(3+) + 2 hydrogen sulfide + 2 5'-deoxyadenosine + 2 L-methionine + 2 reduced [2Fe-2S]-[ferredoxin]. It functions in the pathway protein modification; protein lipoylation via endogenous pathway; protein N(6)-(lipoyl)lysine from octanoyl-[acyl-carrier-protein]: step 2/2. Catalyzes the radical-mediated insertion of two sulfur atoms into the C-6 and C-8 positions of the octanoyl moiety bound to the lipoyl domains of lipoate-dependent enzymes, thereby converting the octanoylated domains into lipoylated derivatives. The polypeptide is Lipoyl synthase (Xanthobacter autotrophicus (strain ATCC BAA-1158 / Py2)).